The primary structure comprises 173 residues: Mesencephalic astrocyte-derived neurotrophic factor homolog (173 aa).

A signal peptide spans 1–22 (MKTTHLVLVLCFLAGVAQTTLA). Cystine bridges form between Cys28/Cys114, Cys31/Cys103, Cys61/Cys72, and Cys148/Cys151.

Belongs to the ARMET family.

The protein localises to the secreted. Required during the maturation of the embryonic nervous system for maintenance of neuronal and cuticular connectivity. Essential for maintenance of dopaminergic neurons and dopamine levels. The polypeptide is Mesencephalic astrocyte-derived neurotrophic factor homolog (Drosophila persimilis (Fruit fly)).